Reading from the N-terminus, the 802-residue chain is Osmosensitive cation channel TMEM63C (802 aa).

Residues 1–35 are Extracellular-facing; sequence MTASPESMGQKFRNMTANECFQSRSTVLQGQPFGG. The chain crosses the membrane as a helical span at residues 36-60; it reads IPTVLLLNIILWVCVVLVYSFLRKA. Over 61–124 the chain is Cytoplasmic; it reads AWDYGRLALL…RDRDLINKCG (64 aa). 2 positions are modified to phosphoserine: Ser75 and Ser78. A helical membrane pass occupies residues 125 to 157; it reads EDARIYIMFQYHLIIFVLILCIPSLGIILPVNY. At 158 to 180 the chain is on the extracellular side; it reads IGSALDWSSHFGRTTIVNVSTES. Residues 181–205 traverse the membrane as a helical segment; sequence QFLWLHSIFAFMYFLTNFAFMGHHC. The Cytoplasmic portion of the chain corresponds to 206–401; it reads LGFVPKKNLH…IIWKHLSIRR (196 aa). Residues 402-431 traverse the membrane as a helical segment; it reads FSWWARFIAINTSLFFLFFFLTTPAIIINT. Over 432 to 446 the chain is Extracellular; it reads IDMYNVTRPIEKLQS. The helical transmembrane segment at 447–476 threads the bilayer; the sequence is PVVTQFFPSVLLWAFTVIMPLLVYFSAFLE. At 477 to 480 the chain is on the cytoplasmic side; that stretch reads AHWT. A helical membrane pass occupies residues 481–517; the sequence is RSNQNLIIMYKCYIFLVFMVVILPSMGLTSLDVFLRW. At 518 to 540 the chain is on the extracellular side; that stretch reads LFDIYYLEHATIRFQCVFLPDNG. A helical transmembrane segment spans residues 541–573; the sequence is AFFINYVITSALFGTGMELMRLGSLCTYCTRLF. Residues 574–593 lie on the Cytoplasmic side of the membrane; it reads LSRSEPERVHIRKNLAMDFQ. Residues 594-612 form a helical membrane-spanning segment; it reads FGREYAWMLNVFSVVMAYS. Residues 613–615 lie on the Extracellular side of the membrane; it reads ITC. The chain crosses the membrane as a helical span at residues 616–640; that stretch reads PIIVPFGLLYLCMKHITDRYNMYYS. The Cytoplasmic portion of the chain corresponds to 641–647; sequence YAPTKLN. The helical transmembrane segment at 648 to 676 threads the bilayer; the sequence is AQIHMAAVYQAIFAPLLGLFWMLFFSILR. At 677–681 the chain is on the extracellular side; that stretch reads VGSLH. The helical transmembrane segment at 682-702 threads the bilayer; the sequence is SITLFSLSSIIISVIIAFSGV. The Cytoplasmic portion of the chain corresponds to 703 to 802; the sequence is FLGKFRIAQQ…EGLELEGQSH (100 aa). The segment at 753–785 is disordered; sequence TPASSPARHTYGTMNSQPEEGEEESGLRGFARE.

This sequence belongs to the CSC1 (TC 1.A.17) family. In terms of assembly, monomer. In terms of tissue distribution, expressed in podocytes of kidney glomeruli.

Its subcellular location is the endoplasmic reticulum membrane. It is found in the cell membrane. It carries out the reaction Ca(2+)(in) = Ca(2+)(out). Acts as an osmosensitive cation channel preferentially activated upon hypotonic stress. In contrast to TMEM63B, does not show phospholipid scramblase activity. Enriched in mitochondria-ER contact sites where it may regulate the metabolite flux and organelles' morphologies in response to osmotic changes. In particular may regulate mitochondrial motility and function in motor neuron axons. Required for the functional integrity of the kidney glomerular filtration barrier. This is Osmosensitive cation channel TMEM63C (Tmem63c) from Rattus norvegicus (Rat).